The chain runs to 362 residues: Protein Tob1 (362 aa).

Positions 22–39 (RRRVNIFGEELERLLKKK) match the Bipartite nuclear localization signal motif. Residues 82 to 92 (VRGNLPQDLSV) are important for nuclear localization. The segment covering 144–160 (DPASSVSSSPSPPFGHS) has biased composition (low complexity). Residues 144 to 171 (DPASSVSSSPSPPFGHSAAVSPTFMPRS) are disordered. The tract at residues 161–220 (AAVSPTFMPRSTQPLTFTTATFAATKFGSTKMKNSGRSSKVARTSPINLGLTVNVNDLLK) is required for interaction with CPEB3. Thr204 carries the post-translational modification Phosphothreonine. A Nuclear export signal motif is present at residues 228–236 (VHSLYGLGL). The tract at residues 234–284 (LGLGSQQQPQPQPQQQQQQQPSSSQPPPPLPQQQQQQPQQQQQQQQQTSAL) is disordered. 2 stretches are compositionally biased toward low complexity: residues 238-256 (SQQQ…QPSS) and 265-280 (QQQQ…QQQQ).

This sequence belongs to the BTG family. As to quaternary structure, interacts with ERBB2. Interacts with CNOT7. Interacts with CPEB3 (via C-terminal RNA-binding region); recruits CNOT7 to CPEB3 to form a ternary complex required for mRNA deadenylation and decay. Interacts with CNOT8. Interacts with CPEB4. In terms of processing, phosphorylated on Ser and Thr residues. As to expression, ubiquitous.

It localises to the cytoplasm. It is found in the nucleus. Its function is as follows. Anti-proliferative protein; the function is mediated by association with deadenylase subunits of the CCR4-NOT complex. Mediates CPEB3-accelerated mRNA deadenylation by binding to CPEB3 and recruiting CNOT7 which leads to target mRNA deadenylation and decay. The chain is Protein Tob1 (Tob1) from Mus musculus (Mouse).